The primary structure comprises 153 residues: Superoxide dismutase [Cu-Zn] (153 aa).

The Cu cation site is built by His-45, His-47, and His-62. Residues Cys-56 and Cys-145 are joined by a disulfide bond. Zn(2+)-binding residues include His-62, His-70, His-79, and Asp-82. His-119 contacts Cu cation.

Belongs to the Cu-Zn superoxide dismutase family. Homodimer. Cu cation serves as cofactor. Zn(2+) is required as a cofactor.

It localises to the cytoplasm. The catalysed reaction is 2 superoxide + 2 H(+) = H2O2 + O2. Destroys radicals which are normally produced within the cells and which are toxic to biological systems. This Drosophila erecta (Fruit fly) protein is Superoxide dismutase [Cu-Zn].